A 151-amino-acid chain; its full sequence is Transcriptional repressor NrdR (151 aa).

Residues Cys-3 to Cys-34 fold into a zinc finger. One can recognise an ATP-cone domain in the interval Ile-49–Thr-139.

The protein belongs to the NrdR family. Zn(2+) is required as a cofactor.

Negatively regulates transcription of bacterial ribonucleotide reductase nrd genes and operons by binding to NrdR-boxes. This chain is Transcriptional repressor NrdR, found in Acetivibrio thermocellus (strain ATCC 27405 / DSM 1237 / JCM 9322 / NBRC 103400 / NCIMB 10682 / NRRL B-4536 / VPI 7372) (Clostridium thermocellum).